A 678-amino-acid chain; its full sequence is Putative cyclic nucleotide-gated ion channel 15 (678 aa).

At 1 to 81 the chain is on the cytoplasmic side; the sequence is MGYGNSRSVR…RGQTIRRWNK (81 aa). Residues 82 to 102 form a helical membrane-spanning segment; sequence IFLIACLVSLFVDPLFFFLPV. Residues 103-115 are Extracellular-facing; sequence MRNEACITIGVRL. The chain crosses the membrane as a helical span at residues 116–136; sequence EVVLTLIRSLADAFYIAQILI. At 137-170 the chain is on the cytoplasmic side; that stretch reads RFRTAYIAPPSRVFGRGELVIDSRKIAWRYLHKS. Residues 171–191 form a helical membrane-spanning segment; it reads FWIHLVAALPLPQVLIWIIIP. Over 192-203 the chain is Extracellular; sequence NLRGSPMTNTKN. A helical membrane pass occupies residues 204 to 224; that stretch reads VLRFIIIFQYVPRMFLIFPLS. Residues 225-245 are Cytoplasmic-facing; it reads RQIIKATGVVTETAWAGAAYN. The helical transmembrane segment at 246 to 266 threads the bilayer; the sequence is LMLYMLASHVLGACWYLLAVE. Over 267–364 the chain is Extracellular; sequence RQEACWRHAC…GQNLATSTYA (98 aa). The helical transmembrane segment at 365–385 threads the bilayer; it reads GEILFAIIIATLGLVLFALLI. At 386–678 the chain is on the cytoplasmic side; it reads GNMQTYLQST…KPVEPDFSSE (293 aa). Residues 471-595 and E542 each bind a nucleoside 3',5'-cyclic phosphate; that span reads LFDQ…TKQL. A calmodulin-binding region spans residues 587 to 602; sequence FRRLHTKQLRHKFRFY. Positions 607–638 constitute an IQ domain; it reads RTWAACFIQAAWRRHRKRKYKTELRAKEEFHY. Residues 656 to 668 show a composition bias toward polar residues; that stretch reads RSGSDSGMMSSIQ. The segment at 656–678 is disordered; that stretch reads RSGSDSGMMSSIQKPVEPDFSSE.

It belongs to the cyclic nucleotide-gated cation channel (TC 1.A.1.5) family. As to quaternary structure, homotetramer or heterotetramer.

It is found in the cell membrane. Its function is as follows. Putative cyclic nucleotide-gated ion channel. The protein is Putative cyclic nucleotide-gated ion channel 15 (CNGC15) of Arabidopsis thaliana (Mouse-ear cress).